The primary structure comprises 371 residues: Aminomethyltransferase (371 aa).

The protein belongs to the GcvT family. In terms of assembly, the glycine cleavage system is composed of four proteins: P, T, L and H.

The enzyme catalyses N(6)-[(R)-S(8)-aminomethyldihydrolipoyl]-L-lysyl-[protein] + (6S)-5,6,7,8-tetrahydrofolate = N(6)-[(R)-dihydrolipoyl]-L-lysyl-[protein] + (6R)-5,10-methylene-5,6,7,8-tetrahydrofolate + NH4(+). Functionally, the glycine cleavage system catalyzes the degradation of glycine. This is Aminomethyltransferase from Leptospira borgpetersenii serovar Hardjo-bovis (strain JB197).